The sequence spans 160 residues: Cytochrome c-type biogenesis protein CcmE (160 aa).

Residues 1–7 lie on the Cytoplasmic side of the membrane; it reads MTRKQRR. The helical; Signal-anchor for type II membrane protein transmembrane segment at 8 to 28 threads the bilayer; the sequence is LFMIFGALGTLGVAVGLILFA. The Periplasmic portion of the chain corresponds to 29-160; the sequence is LSDNIVFFYG…TQGAAAPLIR (132 aa). Positions 122 and 126 each coordinate heme. Residues 140 to 160 are disordered; the sequence is VWQEDGQAKPATQGAAAPLIR.

This sequence belongs to the CcmE/CycJ family.

Its subcellular location is the cell inner membrane. Functionally, heme chaperone required for the biogenesis of c-type cytochromes. Transiently binds heme delivered by CcmC and transfers the heme to apo-cytochromes in a process facilitated by CcmF and CcmH. The protein is Cytochrome c-type biogenesis protein CcmE of Beijerinckia indica subsp. indica (strain ATCC 9039 / DSM 1715 / NCIMB 8712).